The chain runs to 248 residues: Pyridoxine 5'-phosphate synthase (248 aa).

Asparagine 10 contacts 3-amino-2-oxopropyl phosphate. 12–13 (DH) contacts 1-deoxy-D-xylulose 5-phosphate. Residue arginine 21 participates in 3-amino-2-oxopropyl phosphate binding. The Proton acceptor role is filled by histidine 46. 2 residues coordinate 1-deoxy-D-xylulose 5-phosphate: arginine 48 and histidine 53. Glutamate 73 functions as the Proton acceptor in the catalytic mechanism. Threonine 103 is a binding site for 1-deoxy-D-xylulose 5-phosphate. The active-site Proton donor is histidine 194. 3-amino-2-oxopropyl phosphate-binding positions include glycine 195 and 216–217 (GH).

This sequence belongs to the PNP synthase family. As to quaternary structure, homooctamer; tetramer of dimers.

It localises to the cytoplasm. The catalysed reaction is 3-amino-2-oxopropyl phosphate + 1-deoxy-D-xylulose 5-phosphate = pyridoxine 5'-phosphate + phosphate + 2 H2O + H(+). The protein operates within cofactor biosynthesis; pyridoxine 5'-phosphate biosynthesis; pyridoxine 5'-phosphate from D-erythrose 4-phosphate: step 5/5. In terms of biological role, catalyzes the complicated ring closure reaction between the two acyclic compounds 1-deoxy-D-xylulose-5-phosphate (DXP) and 3-amino-2-oxopropyl phosphate (1-amino-acetone-3-phosphate or AAP) to form pyridoxine 5'-phosphate (PNP) and inorganic phosphate. This Legionella pneumophila (strain Lens) protein is Pyridoxine 5'-phosphate synthase.